We begin with the raw amino-acid sequence, 105 residues long: Thioredoxin (105 aa).

Residues 1-105 (MFELDKDTFE…NVEAMVKKYI (105 aa)) enclose the Thioredoxin domain. A disulfide bridge links cysteine 29 with cysteine 32.

Belongs to the thioredoxin family.

Participates in various redox reactions through the reversible oxidation of its active center dithiol to a disulfide and catalyzes dithiol-disulfide exchange reactions. The chain is Thioredoxin (trxA) from Acetoanaerobium sticklandii (strain ATCC 12662 / DSM 519 / JCM 1433 / CCUG 9281 / NCIMB 10654 / HF) (Clostridium sticklandii).